The primary structure comprises 124 residues: Large ribosomal subunit protein bL12 (124 aa).

Belongs to the bacterial ribosomal protein bL12 family. Homodimer. Part of the ribosomal stalk of the 50S ribosomal subunit. Forms a multimeric L10(L12)X complex, where L10 forms an elongated spine to which 2 to 4 L12 dimers bind in a sequential fashion. Binds GTP-bound translation factors.

Forms part of the ribosomal stalk which helps the ribosome interact with GTP-bound translation factors. Is thus essential for accurate translation. The polypeptide is Large ribosomal subunit protein bL12 (Brucella anthropi (strain ATCC 49188 / DSM 6882 / CCUG 24695 / JCM 21032 / LMG 3331 / NBRC 15819 / NCTC 12168 / Alc 37) (Ochrobactrum anthropi)).